The sequence spans 78 residues: Kassorin-S (78 aa).

A signal peptide spans 1–22 (MLTLKKSMLLLFFLGMVSLSLA). Residues 23-64 (NSKRADEEGEDKRADEEGEDKRADEEGEDKRADEEGEEKRKR) constitute a propeptide that is removed on maturation. A disordered region spans residues 24–60 (SKRADEEGEDKRADEEGEDKRADEEGEDKRADEEGEE). The span at 25–60 (KRADEEGEDKRADEEGEDKRADEEGEDKRADEEGEE) shows a compositional bias: basic and acidic residues. At Leu-77 the chain carries Leucine amide.

This sequence belongs to the frog skin active peptide (FSAP) family. Brevinin subfamily. Expressed by the skin glands.

The protein resides in the secreted. Its function is as follows. Antimicrobial peptide. Active against the Gram-positive bacterium S.aureus (MIC=30 uM) and the yeast C.albicans (MIC=100 uM). Not effective against the Gram-negative bacterium E.coli at concentrations up to 250 uM. Lacks ability to induce contraction of smooth muscle in isolated guinea pig urinary bladder. Elicits histamine release from rat peritoneal mast cells. In Kassina senegalensis (Senegal running frog), this protein is Kassorin-S.